The sequence spans 598 residues: Potassium voltage-gated channel subfamily A member 5 (598 aa).

Positions 1–89 (MEIALGPLEN…EEGEGDPGLS (89 aa)) are disordered. Residues 1 to 195 (MEIALGPLEN…FYQLGDEAME (195 aa)) are tetramerization domain. Residues 1-231 (MEIALGPLEN…LIFEYPESSG (231 aa)) lie on the Cytoplasmic side of the membrane. Residues 60 to 69 (RPLPPQPPEL) show a composition bias toward pro residues. Residue Lys205 forms a Glycyl lysine isopeptide (Lys-Gly) (interchain with G-Cter in SUMO) linkage. The chain crosses the membrane as a helical span at residues 232–253 (SARAIAIVSVLVILISIITFCL). Over 254–308 (ETLPEFKDERELLRHPPVPHQPPAAPALGANGSGAVAPASGSTVAPLLPRTLADP) the chain is Extracellular. Residues 309 to 330 (FFIVETTCVIWFTFELLVRFFA) form a helical membrane-spanning segment. Cys331 carries S-palmitoyl cysteine lipidation. Residues 331-341 (CPSKAEFSRNI) are Cytoplasmic-facing. The chain crosses the membrane as a helical span at residues 342 to 362 (MNIIDIVAIFPYFITLGTELA). Residues 363 to 380 (EQQPGGGGGGQNGQQAMS) are Extracellular-facing. Residues 381–401 (LAILRVIRLVRVFRIFKLSRH) form a helical; Voltage-sensor membrane-spanning segment. Over 402 to 416 (SKGLQILGKTLQASM) the chain is Cytoplasmic. The segment at 403-416 (KGLQILGKTLQASM) is S4-S5 linker. The chain crosses the membrane as a helical span at residues 417-438 (RELGLLIFFLFIGVILFSSAVY). At 439–452 (FAEADNQGTHFSSI) the chain is on the extracellular side. Residues 453–464 (PDAFWWAVVTMT) constitute an intramembrane region (helical). The short motif at 465–470 (TVGYGD) is the Selectivity filter element. The stretch at 465–472 (TVGYGDMR) is an intramembrane region. The helical transmembrane segment at 480-508 (IVGSLCAIAGVLTIALPVPVIVSNFNYFY) threads the bilayer. At 509-598 (HRETDHEEQA…CLDTSRETDL (90 aa)) the chain is on the cytoplasmic side. Positions 517–539 (QAALKEEPGSQSRGTSLDAGGQR) are disordered. A Glycyl lysine isopeptide (Lys-Gly) (interchain with G-Cter in SUMO) cross-link involves residue Lys521. Positions 596 to 598 (TDL) match the PDZ-binding motif.

The protein belongs to the potassium channel family. A (Shaker) (TC 1.A.1.2) subfamily. Kv1.5/KCNA5 sub-subfamily. Homotetramer and heterotetramer of potassium channel proteins. Interacts with DLG1, which enhances channel currents. Forms a ternary complex with DLG1 and CAV3. Interacts with KCNAB1. Interacts with UBE2I. Interacts with XIRP2; the interaction is required for normal action potential configuration in the heart. Glycosylated. Post-translationally, sumoylated on Lys-205, and Lys-521, preferentially with SUMO3. Sumoylation regulates the voltage sensitivity of the channel.

The protein localises to the cell membrane. The enzyme catalyses K(+)(in) = K(+)(out). Voltage-gated potassium channel that mediates transmembrane potassium transport in excitable membranes. Forms tetrameric potassium-selective channels through which potassium ions pass in accordance with their electrochemical gradient. The channel alternates between opened and closed conformations in response to the voltage difference across the membrane. Can form functional homotetrameric channels and heterotetrameric channels that contain variable proportions of KCNA1, KCNA2, KCNA4, KCNA5, and possibly other family members as well; channel properties depend on the type of alpha subunits that are part of the channel. Channel properties are modulated by cytoplasmic beta subunits that regulate the subcellular location of the alpha subunits and promote rapid inactivation. Homotetrameric channels display rapid activation and slow inactivation. Required for normal electrical conduction including formation of the infranodal ventricular conduction system and normal action potential configuration, as a result of its interaction with XIRP2. May play a role in regulating the secretion of insulin in normal pancreatic islets. The chain is Potassium voltage-gated channel subfamily A member 5 (KCNA5) from Oryctolagus cuniculus (Rabbit).